Here is a 437-residue protein sequence, read N- to C-terminus: Phosphomethylpyrimidine synthase (437 aa).

Substrate contacts are provided by residues Asn69, Met98, Tyr127, His163, 185–187 (SRG), 226–229 (DACR), and Glu265. His269 lines the Zn(2+) pocket. Tyr292 contacts substrate. Zn(2+) is bound at residue His333. Residues Cys409, Cys412, and Cys416 each contribute to the [4Fe-4S] cluster site.

This sequence belongs to the ThiC family. The cofactor is [4Fe-4S] cluster.

The enzyme catalyses 5-amino-1-(5-phospho-beta-D-ribosyl)imidazole + S-adenosyl-L-methionine = 4-amino-2-methyl-5-(phosphooxymethyl)pyrimidine + CO + 5'-deoxyadenosine + formate + L-methionine + 3 H(+). It participates in cofactor biosynthesis; thiamine diphosphate biosynthesis. In terms of biological role, catalyzes the synthesis of the hydroxymethylpyrimidine phosphate (HMP-P) moiety of thiamine from aminoimidazole ribotide (AIR) in a radical S-adenosyl-L-methionine (SAM)-dependent reaction. This is Phosphomethylpyrimidine synthase from Clostridium botulinum (strain 657 / Type Ba4).